An 89-amino-acid chain; its full sequence is Small ribosomal subunit protein uS15 (89 aa).

It belongs to the universal ribosomal protein uS15 family. Part of the 30S ribosomal subunit. Forms a bridge to the 50S subunit in the 70S ribosome, contacting the 23S rRNA.

In terms of biological role, one of the primary rRNA binding proteins, it binds directly to 16S rRNA where it helps nucleate assembly of the platform of the 30S subunit by binding and bridging several RNA helices of the 16S rRNA. Functionally, forms an intersubunit bridge (bridge B4) with the 23S rRNA of the 50S subunit in the ribosome. This is Small ribosomal subunit protein uS15 from Pseudomonas fluorescens (strain ATCC BAA-477 / NRRL B-23932 / Pf-5).